We begin with the raw amino-acid sequence, 643 residues long: 1-deoxy-D-xylulose-5-phosphate synthase (643 aa).

Thiamine diphosphate contacts are provided by residues H78 and 119–121 (AHS). Residue D150 coordinates Mg(2+). Thiamine diphosphate-binding positions include 151–152 (GA), N179, Y288, and E370. Position 179 (N179) interacts with Mg(2+).

The protein belongs to the transketolase family. DXPS subfamily. Homodimer. It depends on Mg(2+) as a cofactor. Requires thiamine diphosphate as cofactor.

It carries out the reaction D-glyceraldehyde 3-phosphate + pyruvate + H(+) = 1-deoxy-D-xylulose 5-phosphate + CO2. It functions in the pathway metabolic intermediate biosynthesis; 1-deoxy-D-xylulose 5-phosphate biosynthesis; 1-deoxy-D-xylulose 5-phosphate from D-glyceraldehyde 3-phosphate and pyruvate: step 1/1. In terms of biological role, catalyzes the acyloin condensation reaction between C atoms 2 and 3 of pyruvate and glyceraldehyde 3-phosphate to yield 1-deoxy-D-xylulose-5-phosphate (DXP). The chain is 1-deoxy-D-xylulose-5-phosphate synthase from Xanthobacter autotrophicus (strain ATCC BAA-1158 / Py2).